Consider the following 382-residue polypeptide: Nitric oxide reductase FlRd-NAD(+) reductase (382 aa).

This sequence belongs to the FAD-dependent oxidoreductase family. The cofactor is FAD.

The protein resides in the cytoplasm. The enzyme catalyses 2 reduced [nitric oxide reductase rubredoxin domain] + NAD(+) + H(+) = 2 oxidized [nitric oxide reductase rubredoxin domain] + NADH. Its pathway is nitrogen metabolism; nitric oxide reduction. In terms of biological role, one of at least two accessory proteins for anaerobic nitric oxide (NO) reductase. Reduces the rubredoxin moiety of NO reductase. This Vibrio vulnificus (strain CMCP6) protein is Nitric oxide reductase FlRd-NAD(+) reductase.